A 335-amino-acid polypeptide reads, in one-letter code: Large ribosomal subunit protein uL3 (335 aa).

It belongs to the universal ribosomal protein uL3 family. Part of the 50S ribosomal subunit. Forms a cluster with proteins L14 and L24e.

Its function is as follows. One of the primary rRNA binding proteins, it binds directly near the 3'-end of the 23S rRNA, where it nucleates assembly of the 50S subunit. The sequence is that of Large ribosomal subunit protein uL3 from Methanocaldococcus jannaschii (strain ATCC 43067 / DSM 2661 / JAL-1 / JCM 10045 / NBRC 100440) (Methanococcus jannaschii).